The chain runs to 135 residues: Small ribosomal subunit protein uS12 (135 aa).

Asp89 carries the 3-methylthioaspartic acid modification. Residues 101–135 (SLDTSGVADRKQSRSKYGAKQPKAGAAAPVKGKRR) form a disordered region. Over residues 116 to 135 (KYGAKQPKAGAAAPVKGKRR) the composition is skewed to low complexity.

Belongs to the universal ribosomal protein uS12 family. Part of the 30S ribosomal subunit. Contacts proteins S8 and S17. May interact with IF1 in the 30S initiation complex.

Functionally, with S4 and S5 plays an important role in translational accuracy. Its function is as follows. Interacts with and stabilizes bases of the 16S rRNA that are involved in tRNA selection in the A site and with the mRNA backbone. Located at the interface of the 30S and 50S subunits, it traverses the body of the 30S subunit contacting proteins on the other side and probably holding the rRNA structure together. The combined cluster of proteins S8, S12 and S17 appears to hold together the shoulder and platform of the 30S subunit. This chain is Small ribosomal subunit protein uS12, found in Chlorobium phaeobacteroides (strain DSM 266 / SMG 266 / 2430).